We begin with the raw amino-acid sequence, 1047 residues long: Ubiquitin carboxyl-terminal hydrolase 48 (1047 aa).

Residues 89-416 (VGLTNLGATC…NAYMLVYKQQ (328 aa)) form the USP domain. Cys-98 (nucleophile) is an active-site residue. Residue His-348 is the Proton acceptor of the active site. 3 consecutive DUSP domains span residues 457 to 551 (QSVD…RSSL), 567 to 697 (NQLN…DHDP), and 717 to 830 (MMAN…RIHD). The tract at residues 609–647 (LEEDEEETKHNNSKINGEKSSPGTKADGVKGDSEDGDGE) is disordered. A compositionally biased stretch (polar residues) spans 621-631 (SKINGEKSSPG). A compositionally biased stretch (basic and acidic residues) spans 635 to 647 (DGVKGDSEDGDGE). The interval 887-928 (PEFSVSGSDVEDEKEEPKLDGEKDPDFSQTEGGAKRQKLNDT) is disordered. Residues 901–912 (EEPKLDGEKDPD) are compositionally biased toward basic and acidic residues. The Ubiquitin-like domain maps to 961–1012 (VSANQTLKDLKIQIMHAFSVAPFDQNLSIDGRCLKDDSATLGSLGVIPESII).

Belongs to the peptidase C19 family.

It is found in the cytoplasm. The protein resides in the nucleus. It catalyses the reaction Thiol-dependent hydrolysis of ester, thioester, amide, peptide and isopeptide bonds formed by the C-terminal Gly of ubiquitin (a 76-residue protein attached to proteins as an intracellular targeting signal).. Its function is as follows. Recognizes and hydrolyzes the peptide bond at the C-terminal Gly of ubiquitin. Involved in the processing of poly-ubiquitin precursors as well as that of ubiquitinated proteins. The protein is Ubiquitin carboxyl-terminal hydrolase 48 (usp48) of Danio rerio (Zebrafish).